A 172-amino-acid polypeptide reads, in one-letter code: Large ribosomal subunit protein uL10 (172 aa).

The protein belongs to the universal ribosomal protein uL10 family. Part of the ribosomal stalk of the 50S ribosomal subunit. The N-terminus interacts with L11 and the large rRNA to form the base of the stalk. The C-terminus forms an elongated spine to which L12 dimers bind in a sequential fashion forming a multimeric L10(L12)X complex.

In terms of biological role, forms part of the ribosomal stalk, playing a central role in the interaction of the ribosome with GTP-bound translation factors. This is Large ribosomal subunit protein uL10 from Rhodopseudomonas palustris (strain TIE-1).